An 870-amino-acid chain; its full sequence is Disks large homolog 2 (870 aa).

S-palmitoyl cysteine attachment occurs at residues C5 and C7. S28 bears the Phosphoserine mark. At Y58 the chain carries Phosphotyrosine. S65 is subject to Phosphoserine. 2 PDZ domains span residues 98–184 (EITL…VRRR) and 193–279 (EIKL…VGKP). Phosphoserine is present on residues S307, S328, S360, S365, S406, and S414. One can recognise a PDZ 3 domain in the interval 421–501 (KVVLHKGSTG…QTVTIIAQYQ (81 aa)). Y505 carries the post-translational modification Phosphotyrosine. Phosphoserine is present on residues S528, S530, S553, S627, and S635. Positions 536-606 (KRSLYVRAMF…PSKRRVERKE (71 aa)) constitute an SH3 domain. The Guanylate kinase-like domain occupies 680–855 (TRPVIILGPM…IYNQCKLVIE (176 aa)). Residues Y750 and Y755 each carry the phosphotyrosine modification.

The protein belongs to the MAGUK family. In terms of assembly, interacts through its PDZ domains with NETO1. Interacts with NOS1/nNOS through second PDZ domain. Interacts with KCNJ2/Kir2.1 (via C-terminus) through one of its PDZ domains. Interacts with KCNJ4, Interacts with FRMPD4 (via C-terminus). Interacts with LRFN1, LRFN2 and LRFN4. Interacts with FASLG. Interacts with KCNJ4. Interacts with ADAM22. Interacts with DGKI (via PDZ-binding motif). Palmitoylation of isoform 1 is not required for targeting to postsynaptic density.

The protein resides in the cell membrane. It is found in the postsynaptic density. It localises to the synapse. The protein localises to the membrane. Its subcellular location is the cell projection. The protein resides in the axon. It is found in the perikaryon. In terms of biological role, required for perception of chronic pain through NMDA receptor signaling. Regulates surface expression of NMDA receptors in dorsal horn neurons of the spinal cord. Interacts with the cytoplasmic tail of NMDA receptor subunits as well as inward rectifying potassium channels. Involved in regulation of synaptic stability at cholinergic synapses. Part of the postsynaptic protein scaffold of excitatory synapses. This Homo sapiens (Human) protein is Disks large homolog 2 (DLG2).